Here is a 446-residue protein sequence, read N- to C-terminus: Glycogen synthase (446 aa).

Arg15 is an ADP-alpha-D-glucose binding site.

This sequence belongs to the glycosyltransferase 1 family. Bacterial/plant glycogen synthase subfamily.

It catalyses the reaction [(1-&gt;4)-alpha-D-glucosyl](n) + ADP-alpha-D-glucose = [(1-&gt;4)-alpha-D-glucosyl](n+1) + ADP + H(+). Its pathway is glycan biosynthesis; glycogen biosynthesis. Functionally, synthesizes alpha-1,4-glucan chains using ADP-glucose. This chain is Glycogen synthase, found in Deinococcus deserti (strain DSM 17065 / CIP 109153 / LMG 22923 / VCD115).